The following is a 160-amino-acid chain: MIP18 family protein F45G2.10 (160 aa).

A disordered region spans residues 1–32 (MGQERLDNANPTLFDSKPRHRPVTGTERDESV).

Belongs to the MIP18 family.

Its function is as follows. May play a role in chromosome segregation through establishment of sister chromatid cohesion. The polypeptide is MIP18 family protein F45G2.10 (Caenorhabditis elegans).